Consider the following 371-residue polypeptide: Palmitoyl-monogalactosyldiacylglycerol delta-7 desaturase, chloroplastic (371 aa).

The N-terminal 67 residues, 1 to 67 (MASLLTKPKP…KGLKRDVTTA (67 aa)), are a transit peptide targeting the chloroplast. Transmembrane regions (helical) follow at residues 103-123 (FGAVAVVLSMHLLSLLAPFQF) and 127-147 (AVSVAFGLYIVTGLLGITLSF). The Histidine box-1 signature appears at 148–153 (HRNLSH). The Histidine box-2 motif lies at 185 to 189 (HRYHH). The helical transmembrane segment at 251–271 (ALAVALYAMGGFPFIVWGMGV) threads the bilayer. The Histidine box-3 signature appears at 317–321 (HNNHH).

Belongs to the fatty acid desaturase type 1 family. Requires Fe(2+) as cofactor. In terms of tissue distribution, highly expressed in young leaves. Low expression in roots.

It localises to the plastid. The protein resides in the chloroplast membrane. The catalysed reaction is a 1-acyl-2-hexadecanoyl-glycerolipid + 2 reduced [2Fe-2S]-[ferredoxin] + O2 + 2 H(+) = a 1-acyl-2-[(7Z)-hexadecenoyl]-glycerolipid + 2 oxidized [2Fe-2S]-[ferredoxin] + 2 H2O. It functions in the pathway lipid metabolism; oxylipin biosynthesis. The protein operates within lipid metabolism; polyunsaturated fatty acid biosynthesis. Its function is as follows. Fatty acid desaturase involved in the first desaturation step leading to the formation of hexadeca 7,10,13-trienoic acid (16:3(7Z,10Z,13Z)), the major functional components of thylakoid membranes. Required for chloroplast biogenesis at low temperature. Also indirectly involved in the production of the oxylipin dinor-oxo-phyto-dienoic acid implicated in wound signaling. The protein is Palmitoyl-monogalactosyldiacylglycerol delta-7 desaturase, chloroplastic of Arabidopsis thaliana (Mouse-ear cress).